The primary structure comprises 1174 residues: MPLPFGLKLKRTRRYTVSSKSCLVARIQLLNNEFVEFTLSVESTGQESLEAVAQRLELREVTYFSLWYYNKQNQRRWVDLEKPLKKQLDKYALEPTVYFGVVFYVPSVSQLQQEITRYQYYLQLKKDILEGSIPCTLEQAIQLAGLAVQADFGDFDQYESQDFLQKFALFPVGWLQDEKVLEEATQKVALLHQKYRGLTAPDAEMLYMQEVERMDGYGEESYPAKDSQGSDISIGACLEGIFVKHKNGRHPVVFRWHDIANMSHNKSFFALELANKEETIQFQTEDMETAKYIWRLCVARHKFYRLNQCNLQTQTVTVNPIRRRSSSRMSLPKPQPYVMPPPPQLHYNGHYTEPYASSQDNLFVPNQNGYYCHSQTSLDRAQIDLNGRIRNGSVYSAHSTNSLNNPQPYLQPSPMSSNPSITGSDVMRPDYLPSHRHSAVIPPSYRPTPDYETVMKQLNRGLVHAERQSHSLRNLNIGSSYAYSRPAALVYSQPEIREHAQLPSPAAAHCPFSLSYSFHSPSPYPYPAERRPVVGAVSVPELTNAQLQAQDYPSPNIMRTQVYRPPPPYPPPRPANSTPDLSRHLYISSSNPDLITRRVHHSVQTFQEDSLPVAHSLQEVSEPLTAARHAQLHKRNSIEVAGLSHGLEGLRLKERTLSASAAEVAPRAVSVGSQPSVFTERTQREGPEEAEGLRYGHKKSLSDATMLIHSSEEEEDEDFEEESGARAPPARAREPRPGLAQDPPGCPRVLLAGPLHILEPKAHVPDAEKRMMDSSPVRTTAEAQRPWRDGLLMPSMSESDLTTSGRYRARRDSLKKRPVSDLLSGKKNIVEGLPPLGGMKKTRVDAKKIGPLKLAALNGLSLSRVPLPDEGKEVATRATNDERCKILEQRLEQGMVFTEYERILKKRLVDGECSTARLPENAERNRFQDVLPYDDVRVELVPTKENNTGYINASHIKVSVSGIEWDYIATQGPLQNTCQDFWQMVWEQGIAIIAMVTAEEEGGREKSFRYWPRLGSRHNTVTYGRFKITTRFRTDSGCYATTGLKMKHLLTGQERTVWHLQYTDWPEHGCPEDLKGFLSYLEEIQSVRRHTNSTSDPQSPNPPLLVHCSAGVGRTGVVILSEIMIACLEHNEVLDIPRVLDMLRQQRMMLVQTLCQYTFVYRVLIQFLKSSRLI.

In terms of domain architecture, FERM spans 23–308; sequence LVARIQLLNN…ARHKFYRLNQ (286 aa). The segment covering 396–423 has biased composition (polar residues); the sequence is SAHSTNSLNNPQPYLQPSPMSSNPSITG. The interval 396–445 is disordered; that stretch reads SAHSTNSLNNPQPYLQPSPMSSNPSITGSDVMRPDYLPSHRHSAVIPPSY. Ser577, Ser589, Ser590, Ser637, and Ser673 each carry phosphoserine. Positions 673–692 are disordered; that stretch reads SQPSVFTERTQREGPEEAEG. The span at 681–692 shows a compositional bias: basic and acidic residues; it reads RTQREGPEEAEG. Phosphoserine is present on residues Ser710 and Ser711. 2 disordered regions span residues 711 to 745 and 769 to 806; these read SEEE…DPPG and KRMM…TSGR. Over residues 712–722 the composition is skewed to acidic residues; the sequence is EEEEDEDFEEE. Positions 796-805 are enriched in polar residues; the sequence is MSESDLTTSG. 3 positions are modified to phosphoserine: Ser797, Ser799, and Ser804. The Tyrosine-protein phosphatase domain occupies 896 to 1167; it reads VFTEYERILK…TFVYRVLIQF (272 aa). Residues Glu1067, 1108–1114, and Gln1152 each bind substrate; that span reads CSAGVGR. The active-site Phosphocysteine intermediate is Cys1108.

Belongs to the protein-tyrosine phosphatase family. Non-receptor class subfamily.

The protein localises to the cytoplasm. It localises to the cytoskeleton. The enzyme catalyses O-phospho-L-tyrosyl-[protein] + H2O = L-tyrosyl-[protein] + phosphate. The polypeptide is Tyrosine-protein phosphatase non-receptor type 21 (PTPN21) (Homo sapiens (Human)).